Consider the following 461-residue polypeptide: SWM histone demethylase complex subunit phf1 (461 aa).

Residues 79–130 are disordered; the sequence is PYGGMTMPASSSSGATSVPPEQDPSLSVSFNRLPKSASTKTKNGRIRSSRRE. Positions 102–119 are enriched in polar residues; it reads PSLSVSFNRLPKSASTKT. A PHD-type zinc finger spans residues 190 to 246; sequence VTLCSVCQRGHSPLSNRIVFCDGCNSPYHQLCHHPPIDDATVQDVDAEWFCMKCQYR.

Component of the SWM histone demethylase complex composed of at least lsd1, lsd2, phf1 and phf2.

It is found in the nucleus. Its function is as follows. Component of the SWM histone demethylase complex that specifically demethylates H3K9me2, a specific tag for epigenetic transcriptional activation, thereby acting as a corepressor. Has a role in regulating heterochromatin propagation and euchromatic transcription. This is SWM histone demethylase complex subunit phf1 (phf1) from Schizosaccharomyces pombe (strain 972 / ATCC 24843) (Fission yeast).